We begin with the raw amino-acid sequence, 421 residues long: D-amino-acid oxidase (421 aa).

FAD-binding residues include Ala12, Gly13, Ala14, Val15, Gly47, Gly64, Ile65, Lys225, Ala226, Arg359, Gly385, Gly388, and Leu389. Arg359 provides a ligand contact to D-proline. A D-serine-binding site is contributed by Arg359.

It belongs to the DAMOX/DASOX family. FAD is required as a cofactor.

The protein localises to the cytoplasm. Its subcellular location is the secreted. It is found in the cell wall. It catalyses the reaction a D-alpha-amino acid + O2 + H2O = a 2-oxocarboxylate + H2O2 + NH4(+). In terms of biological role, catalyzes the oxidative deamination of D-amino acids with broad substrate specificity. The protein is D-amino-acid oxidase of Bradyrhizobium diazoefficiens (strain JCM 10833 / BCRC 13528 / IAM 13628 / NBRC 14792 / USDA 110).